The sequence spans 113 residues: Ribonuclease P protein component (113 aa).

The protein belongs to the RnpA family. As to quaternary structure, consists of a catalytic RNA component (M1 or rnpB) and a protein subunit.

The enzyme catalyses Endonucleolytic cleavage of RNA, removing 5'-extranucleotides from tRNA precursor.. Its function is as follows. RNaseP catalyzes the removal of the 5'-leader sequence from pre-tRNA to produce the mature 5'-terminus. It can also cleave other RNA substrates such as 4.5S RNA. The protein component plays an auxiliary but essential role in vivo by binding to the 5'-leader sequence and broadening the substrate specificity of the ribozyme. This Finegoldia magna (strain ATCC 29328 / DSM 20472 / WAL 2508) (Peptostreptococcus magnus) protein is Ribonuclease P protein component.